The sequence spans 548 residues: Chaperonin GroEL (548 aa).

Residues 29 to 32 (THGP), Lys50, 86 to 90 (DGTTT), Gly414, and Asp493 contribute to the ATP site.

It belongs to the chaperonin (HSP60) family. Forms a cylinder of 14 subunits composed of two heptameric rings stacked back-to-back. Interacts with the co-chaperonin GroES.

It localises to the cytoplasm. It carries out the reaction ATP + H2O + a folded polypeptide = ADP + phosphate + an unfolded polypeptide.. Functionally, together with its co-chaperonin GroES, plays an essential role in assisting protein folding. The GroEL-GroES system forms a nano-cage that allows encapsulation of the non-native substrate proteins and provides a physical environment optimized to promote and accelerate protein folding. In Desulfatibacillum aliphaticivorans, this protein is Chaperonin GroEL.